A 160-amino-acid polypeptide reads, in one-letter code: UPF0262 protein Mmar10_1128 (160 aa).

The protein belongs to the UPF0262 family.

The chain is UPF0262 protein Mmar10_1128 from Maricaulis maris (strain MCS10) (Caulobacter maris).